Reading from the N-terminus, the 185-residue chain is Ribosome-recycling factor (185 aa).

Belongs to the RRF family.

It is found in the cytoplasm. Its function is as follows. Responsible for the release of ribosomes from messenger RNA at the termination of protein biosynthesis. May increase the efficiency of translation by recycling ribosomes from one round of translation to another. This Alcanivorax borkumensis (strain ATCC 700651 / DSM 11573 / NCIMB 13689 / SK2) protein is Ribosome-recycling factor.